The primary structure comprises 95 residues: MNKYETLFILNPSLDEEGINTNVEKFKSVITNGGGEVENVDLWGKRKLAYEIDKVNEGIYVLVNFQSDAQLPKELDRVFRISDSIIRHLIISLEK.

The protein belongs to the bacterial ribosomal protein bS6 family.

Binds together with bS18 to 16S ribosomal RNA. The protein is Small ribosomal subunit protein bS6 of Clostridium acetobutylicum (strain ATCC 824 / DSM 792 / JCM 1419 / IAM 19013 / LMG 5710 / NBRC 13948 / NRRL B-527 / VKM B-1787 / 2291 / W).